The sequence spans 138 residues: Ribulose bisphosphate carboxylase small subunit (138 aa).

The protein belongs to the RuBisCO small chain family. Heterohexadecamer of 8 large and 8 small subunits.

Its subcellular location is the plastid. It localises to the chloroplast. Functionally, ruBisCO catalyzes two reactions: the carboxylation of D-ribulose 1,5-bisphosphate, the primary event in carbon dioxide fixation, as well as the oxidative fragmentation of the pentose substrate in the photorespiration process. Both reactions occur simultaneously and in competition at the same active site. Although the small subunit is not catalytic it is essential for maximal activity. The polypeptide is Ribulose bisphosphate carboxylase small subunit (Pyropia suborbiculata (Red alga)).